The chain runs to 356 residues: Putative methylthioribose-1-phosphate isomerase (356 aa).

Substrate contacts are provided by residues 57–59 (RGA), R100, and Q206. Catalysis depends on D247, which acts as the Proton donor. 257-258 (NK) contacts substrate.

It belongs to the eIF-2B alpha/beta/delta subunits family. MtnA subfamily.

It catalyses the reaction 5-(methylsulfanyl)-alpha-D-ribose 1-phosphate = 5-(methylsulfanyl)-D-ribulose 1-phosphate. Functionally, catalyzes the interconversion of methylthioribose-1-phosphate (MTR-1-P) into methylthioribulose-1-phosphate (MTRu-1-P). In Pyrococcus abyssi (strain GE5 / Orsay), this protein is Putative methylthioribose-1-phosphate isomerase (aIF-2BI).